Reading from the N-terminus, the 538-residue chain is Chaperonin GroEL (538 aa).

ATP is bound by residues 29–32 (TIGP), 86–90 (DGTTT), glycine 413, 476–478 (NAA), and aspartate 492.

Belongs to the chaperonin (HSP60) family. As to quaternary structure, forms a cylinder of 14 subunits composed of two heptameric rings stacked back-to-back. Interacts with the co-chaperonin GroES.

It is found in the cytoplasm. The enzyme catalyses ATP + H2O + a folded polypeptide = ADP + phosphate + an unfolded polypeptide.. Together with its co-chaperonin GroES, plays an essential role in assisting protein folding. The GroEL-GroES system forms a nano-cage that allows encapsulation of the non-native substrate proteins and provides a physical environment optimized to promote and accelerate protein folding. The protein is Chaperonin GroEL of Staphylococcus aureus (strain NCTC 8325 / PS 47).